The following is a 993-amino-acid chain: Serine/threonine-protein phosphatase 6 regulatory ankyrin repeat subunit B (993 aa).

28 ANK repeats span residues 7–36, 40–69, 73–102, 106–135, 139–168, 172–201, 205–234, 238–267, 271–301, 305–334, 338–367, 371–400, 404–433, 437–466, 470–498, 531–561, 566–595, 599–628, 633–662, 669–698, 702–731, 735–764, 771–800, 803–832, 838–867, 871–901, 905–934, and 941–970; these read TDQPPLVQAIFSGDPEEIRMLIHKTEDVNT, EKRTPLHVAAFLGDAEIIELLILSGARVNA, MWLTPLHRAVASRSEEAVQVLIKHSADVNA, NWQTPLHVAAANKAVKCAEVIIPLLSSVNV, GGRTALHHAALNGHVEMVNLLLAKGANINA, KDRRALHWAAYMGHLDVVALLINHGAEVTC, KGYTPLHAAASNGQINVVKHLLNLGVEIDE, YGNTALHIACYNGQDAVVNELIDYGANVNQ, NGFTPLHFAAASTHGALCLELLVNNGADVNI, DGKSPLHMTAVHGRFTRSQTLIQNGGEIDC, DGNTPLHVAARYGHELLINTLITSGADTAK, HSMFPLHLAALNAHSDCCRKLLSSGFEIDT, FGRTCLHAAAAGGNVECIKLLQSSGADFHK, CGRTPLHYAAANCHFHCIETLVTTGANVNE, WGRTALHYAAASDMDRNKTILGNAHDNSE, EGYNSIHYAAAYGHRQCLELLLERTNSGFEE, ATKSPLHLAAYNGHHQALEVLLQSLVDLDI, KGRTALDLAAFKGHTECVEALINQGASIFV, TKRTPLHASVINGHTLCLRLLLEIADNPEA, KGQTPLMLAVAYGHIDAVSLLLEKEANVDT, LGCTALHRGIMTGHEECVQMLLEQEVSILC, RGRTPLHYAAARGHATWLSELLQMALSEED, QGYTPLHWACYNGNENCIEVLLEQKCFRKF, NPFTPLHCAIINDHGNCASLLLGAIDSSIV, KGRTPLHAAAFADHVECLQLLLRHSAPVNA, SGKTALMMAAENGQAGAVDILVNSAQADLTV, DLNTPLHLACSKGHEKCALLILDKIQDESL, and ALQTPLHVAARNGLKVVVEELLAKGACVLA.

As to quaternary structure, protein phosphatase 6 (PP6) holoenzyme is proposed to be a heterotrimeric complex formed by the catalytic subunit, a SAPS domain-containing subunit (PP6R) and an ankyrin repeat-domain containing regulatory subunit (ARS). Interacts with PPP6R1.

Putative regulatory subunit of protein phosphatase 6 (PP6) that may be involved in the recognition of phosphoprotein substrates. The chain is Serine/threonine-protein phosphatase 6 regulatory ankyrin repeat subunit B (ANKRD44) from Homo sapiens (Human).